The chain runs to 687 residues: DnaJ protein ERDJ2A (687 aa).

The Lumenal portion of the chain corresponds to 1–8; the sequence is MAASEENS. The chain crosses the membrane as a helical span at residues 9–29; that stretch reads ALFPIFILTIMAIPLVPYTMV. Residues 30–65 lie on the Cytoplasmic side of the membrane; it reads KLSGALSKKQRTIHCQCLECDRSGKYKRSLFKKISN. The chain crosses the membrane as a helical span at residues 66-86; sequence FSTWSNLTLVLLWVVMIFLIY. Over 87 to 190 the chain is Lumenal; it reads YTKNMSREAQ…FLLDIDGASG (104 aa). Asparagine 90 carries an N-linked (GlcNAc...) asparagine glycan. The region spanning 99-164 is the J domain; the sequence is DPFSILGLEP…VSRENFEKYG (66 aa). Residues 191 to 211 traverse the membrane as a helical segment; the sequence is GILLLWIVGVCILLPLVIAVI. The region spanning 205 to 603 is the SEC63 domain; the sequence is PLVIAVIYLS…IGCDKKQALK (399 aa). Over 212–687 the chain is Cytoplasmic; sequence YLSRSSKYTG…SSEESGSEEE (476 aa). The segment at 619 to 687 is disordered; it reads SDEGAIAEEG…SSEESGSEEE (69 aa). Positions 623–654 are enriched in acidic residues; sequence AIAEEGMEEEDEIEEEDYDDDYESEYSEDEDE.

Interacts with OEP61/TPR7. Expressed in leaves, flower buds and flowers.

It is found in the endoplasmic reticulum membrane. Required for integral membrane and secreted preprotein translocation across the endoplasmic reticulum membrane. This Arabidopsis thaliana (Mouse-ear cress) protein is DnaJ protein ERDJ2A (ERDJ2A).